The sequence spans 221 residues: Nuclear phosphoprotein UL3 homolog (221 aa).

Belongs to the alphaherpesvirinae HHV-1 UL3 family. Post-translationally, phosphorylated.

The protein resides in the host nucleus. This is Nuclear phosphoprotein UL3 homolog from Varicella-zoster virus (strain Oka vaccine) (HHV-3).